A 170-amino-acid polypeptide reads, in one-letter code: Adenine phosphoribosyltransferase (170 aa).

It belongs to the purine/pyrimidine phosphoribosyltransferase family. As to quaternary structure, homodimer.

Its subcellular location is the cytoplasm. It carries out the reaction AMP + diphosphate = 5-phospho-alpha-D-ribose 1-diphosphate + adenine. It participates in purine metabolism; AMP biosynthesis via salvage pathway; AMP from adenine: step 1/1. Its function is as follows. Catalyzes a salvage reaction resulting in the formation of AMP, that is energically less costly than de novo synthesis. The polypeptide is Adenine phosphoribosyltransferase (Mycoplasma capricolum subsp. capricolum (strain California kid / ATCC 27343 / NCTC 10154)).